Here is a 333-residue protein sequence, read N- to C-terminus: Tetraacyldisaccharide 4'-kinase (333 aa).

Residue 55–62 (SVGGNGKT) coordinates ATP.

It belongs to the LpxK family.

The catalysed reaction is a lipid A disaccharide + ATP = a lipid IVA + ADP + H(+). It participates in glycolipid biosynthesis; lipid IV(A) biosynthesis; lipid IV(A) from (3R)-3-hydroxytetradecanoyl-[acyl-carrier-protein] and UDP-N-acetyl-alpha-D-glucosamine: step 6/6. Transfers the gamma-phosphate of ATP to the 4'-position of a tetraacyldisaccharide 1-phosphate intermediate (termed DS-1-P) to form tetraacyldisaccharide 1,4'-bis-phosphate (lipid IVA). This Aeromonas hydrophila subsp. hydrophila (strain ATCC 7966 / DSM 30187 / BCRC 13018 / CCUG 14551 / JCM 1027 / KCTC 2358 / NCIMB 9240 / NCTC 8049) protein is Tetraacyldisaccharide 4'-kinase.